A 554-amino-acid chain; its full sequence is DM7 family protein GG17593 (554 aa).

Belongs to the DM7 family.

The protein is DM7 family protein GG17593 of Drosophila erecta (Fruit fly).